Reading from the N-terminus, the 491-residue chain is UDP-N-acetylmuramate--L-alanine ligase (491 aa).

Residue 126–132 participates in ATP binding; sequence GTHGKTT.

It belongs to the MurCDEF family.

Its subcellular location is the cytoplasm. It catalyses the reaction UDP-N-acetyl-alpha-D-muramate + L-alanine + ATP = UDP-N-acetyl-alpha-D-muramoyl-L-alanine + ADP + phosphate + H(+). Its pathway is cell wall biogenesis; peptidoglycan biosynthesis. In terms of biological role, cell wall formation. This is UDP-N-acetylmuramate--L-alanine ligase from Shigella flexneri.